Consider the following 179-residue polypeptide: Large ribosomal subunit protein uL5 (179 aa).

The protein belongs to the universal ribosomal protein uL5 family. Part of the 50S ribosomal subunit; part of the 5S rRNA/L5/L18/L25 subcomplex. Contacts the 5S rRNA and the P site tRNA. Forms a bridge to the 30S subunit in the 70S ribosome.

This is one of the proteins that bind and probably mediate the attachment of the 5S RNA into the large ribosomal subunit, where it forms part of the central protuberance. In the 70S ribosome it contacts protein S13 of the 30S subunit (bridge B1b), connecting the 2 subunits; this bridge is implicated in subunit movement. Contacts the P site tRNA; the 5S rRNA and some of its associated proteins might help stabilize positioning of ribosome-bound tRNAs. The polypeptide is Large ribosomal subunit protein uL5 (Prochlorococcus marinus (strain NATL2A)).